Here is a 98-residue protein sequence, read N- to C-terminus: MATTIKPLEDRVLVQPLEAEQTTASGLVIPDTAKEKPQEGKVISAGPGRVDDKGTRVPMDVKEGDVVIFSKYGGTEVKYDGQEYLLLNARDILAVVEK.

Residues 35-57 form a disordered region; it reads EKPQEGKVISAGPGRVDDKGTRV.

The protein belongs to the GroES chaperonin family. In terms of assembly, heptamer of 7 subunits arranged in a ring. Interacts with the chaperonin GroEL.

It is found in the cytoplasm. Together with the chaperonin GroEL, plays an essential role in assisting protein folding. The GroEL-GroES system forms a nano-cage that allows encapsulation of the non-native substrate proteins and provides a physical environment optimized to promote and accelerate protein folding. GroES binds to the apical surface of the GroEL ring, thereby capping the opening of the GroEL channel. The protein is Co-chaperonin GroES of Cutibacterium acnes (strain DSM 16379 / KPA171202) (Propionibacterium acnes).